Reading from the N-terminus, the 397-residue chain is Inositol 3-kinase (397 aa).

ATP is bound by residues S228, 278-281 (GAGD), and N305. D281 serves as the catalytic Proton acceptor.

This sequence belongs to the carbohydrate kinase pfkB family. In terms of tissue distribution, expressed in roots, leaf blade shoots, leaf sheath shoots and panicles.

It catalyses the reaction myo-inositol + ATP = 1D-myo-inositol 3-phosphate + ADP + H(+). Kinase that phosphorylates myo-inositol to produce multiple myo-inositol monophosphates. Participates in phytic acid biosynthesis in developing seeds. Phytic acid is the primary storage form of phosphorus in cereal grains and other plant seeds. The sequence is that of Inositol 3-kinase from Oryza sativa subsp. japonica (Rice).